A 246-amino-acid chain; its full sequence is Endonuclease NucS (246 aa).

It belongs to the NucS endonuclease family.

Its subcellular location is the cytoplasm. Its function is as follows. Cleaves both 3' and 5' ssDNA extremities of branched DNA structures. The protein is Endonuclease NucS of Corynebacterium urealyticum (strain ATCC 43042 / DSM 7109).